A 569-amino-acid polypeptide reads, in one-letter code: Proline--tRNA ligase (569 aa).

Belongs to the class-II aminoacyl-tRNA synthetase family. ProS type 1 subfamily. As to quaternary structure, homodimer.

It is found in the cytoplasm. It carries out the reaction tRNA(Pro) + L-proline + ATP = L-prolyl-tRNA(Pro) + AMP + diphosphate. Functionally, catalyzes the attachment of proline to tRNA(Pro) in a two-step reaction: proline is first activated by ATP to form Pro-AMP and then transferred to the acceptor end of tRNA(Pro). As ProRS can inadvertently accommodate and process non-cognate amino acids such as alanine and cysteine, to avoid such errors it has two additional distinct editing activities against alanine. One activity is designated as 'pretransfer' editing and involves the tRNA(Pro)-independent hydrolysis of activated Ala-AMP. The other activity is designated 'posttransfer' editing and involves deacylation of mischarged Ala-tRNA(Pro). The misacylated Cys-tRNA(Pro) is not edited by ProRS. This chain is Proline--tRNA ligase, found in Nitratiruptor sp. (strain SB155-2).